The following is a 1801-amino-acid chain: Sperm flagellar protein 2 (1801 aa).

The 105-residue stretch at 1-105 (MSEILCQWLN…LLYQLYIALQ (105 aa)) folds into the Calponin-homology (CH) domain. Coiled coils occupy residues 176 to 260 (EKFE…KDLQ) and 321 to 395 (AHEA…TKQA). Positions 632-659 (QDKNELTDTQVPGEAAPQKEGTKSSDFE) are disordered. 2 coiled-coil regions span residues 722–748 (NQAKLLEEALTGYKRKSLQLKKKKAQM) and 869–895 (ATEVSNKKIKVEKKLEEKETEKKSAVS). 2 stretches are compositionally biased toward basic and acidic residues: residues 883–892 (LEEKETEKKS) and 909–918 (EAEKEKEVHQ). The disordered stretch occupies residues 883–949 (LEEKETEKKS…KISVKKSPID (67 aa)). Residues 1051–1077 (EDLWEDEETKAELHQRVNDLRDRLWDI) are a coiled coil. Composition is skewed to basic and acidic residues over residues 1233–1250 (RLAEEEKEQPQLDPKEKS) and 1261–1295 (KEKEQAKKEKEQAKKEKEQAKKEKEPPKKKMAEKK). Disordered stretches follow at residues 1233–1304 (RLAE…SPVV), 1651–1695 (KTSI…NANT), and 1781–1801 (SEHAQGSDGERSPSRLTDEKK). Residues 1252 to 1286 (QSGTNKKAKKEKEQAKKEKEQAKKEKEQAKKEKEP) are a coiled coil. Positions 1305–1657 (EVSPVTITPE…TAEKTSISSV (353 aa)) are interaction with IFT20. The stretch at 1665–1695 (EAEENSTREELKEEKDERDQKEEEIPENANT) forms a coiled coil. Basic and acidic residues predominate over residues 1669–1687 (NSTREELKEEKDERDQKEE).

In terms of assembly, interacts (via C-terminus) with IFT20. Interacts with DYNC1I2. As to expression, predominantly expressed in ciliated tissues such as lung, trachea, testis, brain, and at lower levels in kidney and spleen.

It localises to the cell projection. It is found in the cilium. The protein resides in the flagellum. Its subcellular location is the cytoplasm. The protein localises to the golgi apparatus. Required for correct axoneme development in spermatozoa. Important for normal development of the manchette and sperm head morphology. Essential for male fertility. Plays a role in localization of the intraflagellar transport protein IFT20 to the manchette, suggesting function as an adapter for dynein-mediated protein transport during spermatogenesis. Also plays a role in bone growth where it seems to be required for normal osteoblast differentiation. This Rattus norvegicus (Rat) protein is Sperm flagellar protein 2 (Spef2).